Consider the following 333-residue polypeptide: Dihydroorotate dehydrogenase (quinone) (333 aa).

Residues 56 to 60 (AGLDK) and Thr80 each bind FMN. Lys60 contacts substrate. A substrate-binding site is contributed by 105–109 (NRMGF). FMN-binding residues include Asn133 and Asn166. Residue Asn166 coordinates substrate. Ser169 serves as the catalytic Nucleophile. A substrate-binding site is contributed by Asn171. Residues Lys211 and Thr239 each contribute to the FMN site. A substrate-binding site is contributed by 240–241 (NT). FMN is bound by residues Gly262, Gly291, and 312–313 (YS).

The protein belongs to the dihydroorotate dehydrogenase family. Type 2 subfamily. Monomer. It depends on FMN as a cofactor.

The protein localises to the cell membrane. The enzyme catalyses (S)-dihydroorotate + a quinone = orotate + a quinol. It participates in pyrimidine metabolism; UMP biosynthesis via de novo pathway; orotate from (S)-dihydroorotate (quinone route): step 1/1. Catalyzes the conversion of dihydroorotate to orotate with quinone as electron acceptor. The protein is Dihydroorotate dehydrogenase (quinone) of Legionella pneumophila (strain Corby).